The sequence spans 313 residues: Olfactory receptor 8B2 (313 aa).

The Extracellular segment spans residues 1 to 25 (MLARNNSLVTEFILAGLTDHPEFRQ). Asparagine 5 carries an N-linked (GlcNAc...) asparagine glycan. The helical transmembrane segment at 26–46 (PLFFLFLVIYIVTMVGNLGLI) threads the bilayer. Residues 47–54 (TLFGLNSH) lie on the Cytoplasmic side of the membrane. The chain crosses the membrane as a helical span at residues 55–75 (LHTPMYYFLFNLSFIDLCYSS). Residues 76–99 (VFTPKMLMNFVSKKNIISNVGCMT) lie on the Extracellular side of the membrane. The cysteines at positions 97 and 189 are disulfide-linked. A helical transmembrane segment spans residues 100–120 (RLFFFLFFVISECYMLTSMAY). Over 121-139 (DRYVAICNPLLYKVTMSHQ) the chain is Cytoplasmic. Residues 140-160 (VCSMLTFAAYIMGLAGATAHT) form a helical membrane-spanning segment. Residues 161 to 197 (GCMLRLTFCSANIINHYLCDILPLLQLSCTSTYVNEV) lie on the Extracellular side of the membrane. Residues 198-217 (VVLIVVGTNITVPSCTILIS) form a helical membrane-spanning segment. Residues 218–237 (YVFIVTSILHIKSTQGRSKA) lie on the Cytoplasmic side of the membrane. The chain crosses the membrane as a helical span at residues 238-258 (FSTCSSHVIALSLFFGSAAFM). Over 259–270 (YIKYSSGSMEQG) the chain is Extracellular. A helical membrane pass occupies residues 271–291 (KVSSVFYTNVVPMLNPLIYSL). The Cytoplasmic portion of the chain corresponds to 292–313 (RNKDVKVALRKALIKIQRRNIF).

It belongs to the G-protein coupled receptor 1 family.

It is found in the cell membrane. Functionally, odorant receptor. This Homo sapiens (Human) protein is Olfactory receptor 8B2 (OR8B2).